A 213-amino-acid chain; its full sequence is NADH-quinone oxidoreductase subunit I (213 aa).

2 4Fe-4S ferredoxin-type domains span residues 74–103 (RFIESENERCIGCGLCEKICISNCIRMETS) and 113–142 (ENYSINLGRCIYCGFCAEVCPELAIVHGTE). Residues Cys83, Cys86, Cys89, Cys93, Cys122, Cys125, Cys128, and Cys132 each coordinate [4Fe-4S] cluster.

Belongs to the complex I 23 kDa subunit family. In terms of assembly, NDH-1 is composed of 14 different subunits. Subunits NuoA, H, J, K, L, M, N constitute the membrane sector of the complex. [4Fe-4S] cluster is required as a cofactor.

The protein localises to the cell inner membrane. It catalyses the reaction a quinone + NADH + 5 H(+)(in) = a quinol + NAD(+) + 4 H(+)(out). NDH-1 shuttles electrons from NADH, via FMN and iron-sulfur (Fe-S) centers, to quinones in the respiratory chain. The immediate electron acceptor for the enzyme in this species is believed to be ubiquinone. Couples the redox reaction to proton translocation (for every two electrons transferred, four hydrogen ions are translocated across the cytoplasmic membrane), and thus conserves the redox energy in a proton gradient. This chain is NADH-quinone oxidoreductase subunit I, found in Campylobacter jejuni subsp. jejuni serotype O:23/36 (strain 81-176).